Here is a 310-residue protein sequence, read N- to C-terminus: Nucleotide-binding protein BLA_1368 (310 aa).

Residues 1–21 are disordered; sequence MQSARNEQRGTGPESPHAASP. Residue 32-39 participates in ATP binding; it reads GMSGAGRS. 83 to 86 is a binding site for GTP; that stretch reads DVRS.

Belongs to the RapZ-like family.

Its function is as follows. Displays ATPase and GTPase activities. This Bifidobacterium animalis subsp. lactis (strain AD011) protein is Nucleotide-binding protein BLA_1368.